The primary structure comprises 145 residues: Small ribosomal subunit protein eS19 (145 aa).

The segment at 120–145 (GGRRISENGQRDLDRIAAQTLEEDDE) is disordered. Residues 123–134 (RISENGQRDLDR) show a composition bias toward basic and acidic residues.

Belongs to the eukaryotic ribosomal protein eS19 family. Component of the small ribosomal subunit. Mature ribosomes consist of a small (40S) and a large (60S) subunit. The 40S subunit contains about 32 different proteins and 1 molecule of RNA (18S). The 60S subunit contains 45 different proteins and 3 molecules of RNA (25S, 5.8S and 5S).

It localises to the cytoplasm. Functionally, component of the ribosome, a large ribonucleoprotein complex responsible for the synthesis of proteins in the cell. The small ribosomal subunit (SSU) binds messenger RNAs (mRNAs) and translates the encoded message by selecting cognate aminoacyl-transfer RNA (tRNA) molecules. The large subunit (LSU) contains the ribosomal catalytic site termed the peptidyl transferase center (PTC), which catalyzes the formation of peptide bonds, thereby polymerizing the amino acids delivered by tRNAs into a polypeptide chain. The nascent polypeptides leave the ribosome through a tunnel in the LSU and interact with protein factors that function in enzymatic processing, targeting, and the membrane insertion of nascent chains at the exit of the ribosomal tunnel. RPS19A is required for proper maturation of the small (40S) ribosomal subunit. In Candida albicans (strain SC5314 / ATCC MYA-2876) (Yeast), this protein is Small ribosomal subunit protein eS19 (RPS19A).